A 247-amino-acid polypeptide reads, in one-letter code: Triosephosphate isomerase (247 aa).

9-11 (NWK) contributes to the substrate binding site. Catalysis depends on histidine 94, which acts as the Electrophile. Catalysis depends on glutamate 165, which acts as the Proton acceptor. Substrate is bound by residues glycine 171, serine 209, and 230–231 (GG).

This sequence belongs to the triosephosphate isomerase family. Homodimer.

The protein localises to the cytoplasm. The catalysed reaction is D-glyceraldehyde 3-phosphate = dihydroxyacetone phosphate. It functions in the pathway carbohydrate biosynthesis; gluconeogenesis. Its pathway is carbohydrate degradation; glycolysis; D-glyceraldehyde 3-phosphate from glycerone phosphate: step 1/1. Its function is as follows. Involved in the gluconeogenesis. Catalyzes stereospecifically the conversion of dihydroxyacetone phosphate (DHAP) to D-glyceraldehyde-3-phosphate (G3P). This chain is Triosephosphate isomerase, found in Albidiferax ferrireducens (strain ATCC BAA-621 / DSM 15236 / T118) (Rhodoferax ferrireducens).